The primary structure comprises 500 residues: Probable cytosol aminopeptidase (500 aa).

Mn(2+) contacts are provided by lysine 268 and aspartate 273. Lysine 280 is a catalytic residue. Mn(2+) contacts are provided by aspartate 291, aspartate 350, and glutamate 352. Residue arginine 354 is part of the active site.

It belongs to the peptidase M17 family. Mn(2+) serves as cofactor.

It is found in the cytoplasm. It catalyses the reaction Release of an N-terminal amino acid, Xaa-|-Yaa-, in which Xaa is preferably Leu, but may be other amino acids including Pro although not Arg or Lys, and Yaa may be Pro. Amino acid amides and methyl esters are also readily hydrolyzed, but rates on arylamides are exceedingly low.. It carries out the reaction Release of an N-terminal amino acid, preferentially leucine, but not glutamic or aspartic acids.. Presumably involved in the processing and regular turnover of intracellular proteins. Catalyzes the removal of unsubstituted N-terminal amino acids from various peptides. This Baumannia cicadellinicola subsp. Homalodisca coagulata protein is Probable cytosol aminopeptidase.